The sequence spans 393 residues: N-lysine methyltransferase KMT5A (393 aa).

Positions 68 to 88 are disordered; sequence PGPEMVERRGPGRPRTDGENV. The segment covering 72–85 has biased composition (basic and acidic residues); it reads MVERRGPGRPRTDG. S100 carries the post-translational modification Phosphoserine. Positions 134–163 form a coiled coil; that stretch reads RKREEKRNAGNAVRSAMKSEEQKIKDARKG. Positions 135 to 241 are disordered; sequence KREEKRNAGN…SRKSKAELQS (107 aa). Over residues 150–162 the composition is skewed to basic and acidic residues; that stretch reads MKSEEQKIKDARK. K162 is subject to N6-acetyllysine. T181 carries the post-translational modification Phosphothreonine. Positions 197-213 are enriched in basic residues; it reads ALKKPIKGKQAPRKKAQ. Residues 257 to 378 form the SET domain; it reads EGMKIDLIDG…AGEELLYDYG (122 aa). S-adenosyl-L-methionine is bound by residues 267-269, Y312, and 339-340; these read KGR and NH.

It belongs to the class V-like SAM-binding methyltransferase superfamily. Histone-lysine methyltransferase family. PR/SET subfamily. As to quaternary structure, interacts with L3MBTL1. In terms of assembly, interacts with SIRT2 (phosphorylated form); the interaction is direct, stimulates KMT5A-mediated methyltransferase activity at histone H4 'Lys-20' (H4K20me1) and is increased in a H(2)O(2)-induced oxidative stress-dependent manner. Acetylated at Lys-162; does not affect methyltransferase activity. Deacetylated at Lys-162 possibly by SIRT2; does not change methyltransferase activity. Post-translationally, ubiquitinated and degraded by the DCX(DTL) complex.

It is found in the nucleus. It localises to the chromosome. The enzyme catalyses L-lysyl(20)-[histone H4] + S-adenosyl-L-methionine = N(6)-methyl-L-lysyl(20)-[histone H4] + S-adenosyl-L-homocysteine + H(+). The catalysed reaction is L-lysyl-[protein] + S-adenosyl-L-methionine = N(6)-methyl-L-lysyl-[protein] + S-adenosyl-L-homocysteine + H(+). Its function is as follows. Protein-lysine N-methyltransferase that monomethylates both histones and non-histone proteins. Specifically monomethylates 'Lys-20' of histone H4 (H4K20me1). H4K20me1 is enriched during mitosis and represents a specific tag for epigenetic transcriptional repression. Mainly functions in euchromatin regions, thereby playing a central role in the silencing of euchromatic genes. Required for cell proliferation, probably by contributing to the maintenance of proper higher-order structure of DNA during mitosis. Involved in chromosome condensation and proper cytokinesis. Nucleosomes are preferred as substrate compared to free histones. Mediates monomethylation of p53/TP53 at 'Lys-382', leading to repress p53/TP53-target genes. Plays a negative role in TGF-beta response regulation and a positive role in cell migration. The protein is N-lysine methyltransferase KMT5A of Homo sapiens (Human).